Here is a 458-residue protein sequence, read N- to C-terminus: MLFNFIKDKNKHIHFIGIGGISMSGLAEILLYHNFTISGSDMNSSPITKKLKDKGAHIYIGHKKENIKDADLIVYTAAIASDNPEIIEAKEKNIKLMDRADFLGDLMKGYKYNIAISGTHGKTTTTSMLSHVALKANVDPTILVGGNLDIINGNVRVGKSDFFITEACEYKSSFLKFFPYIGAILNIDADHLDYYRDLNDIKNAFSKFIKLIPKDGYLVAYGEDKNIQSIIKEANCNVITYGINSGDIQAHNIEYDEKACGNFDVVKDNQKLFSVKLNVPGKHNILNSLASICIGLASNMKCKDIIEGIESFFGTHRRFELKGCKNNITVIDDYAHHPTEISATLDAAKKYPHNKLFCVFQPHTYSRTLTLFDDFTKCFDNADEIILADIYAAREKDTGIISSDMLGDKLRDRGLKCTNFHKFDDIKNYLIENAKDGDLILTVGAGDIYKVGEMYINL.

Position 118–124 (G118–T124) interacts with ATP.

This sequence belongs to the MurCDEF family.

The protein resides in the cytoplasm. The enzyme catalyses UDP-N-acetyl-alpha-D-muramate + L-alanine + ATP = UDP-N-acetyl-alpha-D-muramoyl-L-alanine + ADP + phosphate + H(+). The protein operates within cell wall biogenesis; peptidoglycan biosynthesis. Functionally, cell wall formation. The polypeptide is UDP-N-acetylmuramate--L-alanine ligase (Clostridium botulinum (strain Kyoto / Type A2)).